Reading from the N-terminus, the 352-residue chain is Probable dual-specificity RNA methyltransferase RlmN (352 aa).

E99 functions as the Proton acceptor in the catalytic mechanism. Positions 105–339 (TKSRTTACVS…VTVRRSRGKD (235 aa)) constitute a Radical SAM core domain. An intrachain disulfide couples C112 to C344. Residues C119, C123, and C126 each coordinate [4Fe-4S] cluster. S-adenosyl-L-methionine-binding positions include 170–171 (GE), S202, 225–227 (SLH), and N301. Residue C344 is the S-methylcysteine intermediate of the active site.

It belongs to the radical SAM superfamily. RlmN family. Requires [4Fe-4S] cluster as cofactor.

The protein resides in the cytoplasm. It carries out the reaction adenosine(2503) in 23S rRNA + 2 reduced [2Fe-2S]-[ferredoxin] + 2 S-adenosyl-L-methionine = 2-methyladenosine(2503) in 23S rRNA + 5'-deoxyadenosine + L-methionine + 2 oxidized [2Fe-2S]-[ferredoxin] + S-adenosyl-L-homocysteine. It catalyses the reaction adenosine(37) in tRNA + 2 reduced [2Fe-2S]-[ferredoxin] + 2 S-adenosyl-L-methionine = 2-methyladenosine(37) in tRNA + 5'-deoxyadenosine + L-methionine + 2 oxidized [2Fe-2S]-[ferredoxin] + S-adenosyl-L-homocysteine. In terms of biological role, specifically methylates position 2 of adenine 2503 in 23S rRNA and position 2 of adenine 37 in tRNAs. This chain is Probable dual-specificity RNA methyltransferase RlmN, found in Christiangramia forsetii (strain DSM 17595 / CGMCC 1.15422 / KT0803) (Gramella forsetii).